A 290-amino-acid chain; its full sequence is Putative beta-lactamase HcpC (290 aa).

The N-terminal stretch at M1–A25 is a signal peptide. 7 TPR repeats span residues P29–S62, C64–N98, C100–A133, E134–D170, C172–S205, P206–G242, and C244–G278. Disulfide bonds link C56–C64, C92–C100, C128–C136, C164–C172, C200–C208, C236–C244, and C272–C280.

It belongs to the hcp beta-lactamase family.

It is found in the secreted. It catalyses the reaction a beta-lactam + H2O = a substituted beta-amino acid. Functionally, may hydrolyze 6-aminopenicillinic acid and 7-aminocephalosporanic acid (ACA) derivatives. This chain is Putative beta-lactamase HcpC (hcpC), found in Helicobacter pylori (strain J99 / ATCC 700824) (Campylobacter pylori J99).